The following is a 277-amino-acid chain: MSKSLKKLVEESREKNQPEVDMSDRGISNMLDINGLFTLSHITQLVLSHNKLTTVPPNIAELKNLEVLNFFNNQIEELPTQISSLQKLKHLNLGMNRLNTLPRGFGSLPALEVLDLTYNNLNENSLPGNFFYLTTLRALYLSDNDFEILPPDIGKLTKLQILSLRDNDLISLPKEIGELTQLKELHIQGNRLTVLPPELGNLDLTGQKQIFKAENNPWVTPIADQFQLGVSHVFEYIRSETYKYLYGRHMQANPEPPKKNNDKSKKISRKPLAAKNK.

Residues 1-23 are disordered; sequence MSKSLKKLVEESREKNQPEVDMS. Position 2 is an N-acetylserine (Ser-2). A compositionally biased stretch (basic and acidic residues) spans 7-23; sequence KLVEESREKNQPEVDMS. 7 LRR repeats span residues 41-63, 64-85, 87-109, 110-133, 135-156, 158-179, and 181-202; these read HITQLVLSHNKLTTVPPNIAELK, NLEVLNFFNNQIEELPTQISSL, KLKHLNLGMNRLNTLPRGFGSLP, ALEVLDLTYNNLNENSLPGNFFYL, TLRALYLSDNDFEILPPDIGKL, KLQILSLRDNDLISLPKEIGEL, and QLKELHIQGNRLTVLPPELGNL. The tract at residues 250–277 is disordered; sequence MQANPEPPKKNNDKSKKISRKPLAAKNK. The segment covering 256–265 has biased composition (basic and acidic residues); the sequence is PPKKNNDKSK.

Potentially plays a role in the Ras signal transduction pathway. Capable of suppressing v-Ras transformation in vitro. The chain is Ras suppressor protein 1 (RSU1) from Bos taurus (Bovine).